The primary structure comprises 224 residues: Elongation factor Ts (224 aa).

The interval 81–84 (TDFV) is involved in Mg(2+) ion dislocation from EF-Tu.

It belongs to the EF-Ts family.

The protein resides in the cytoplasm. Associates with the EF-Tu.GDP complex and induces the exchange of GDP to GTP. It remains bound to the aminoacyl-tRNA.EF-Tu.GTP complex up to the GTP hydrolysis stage on the ribosome. The chain is Elongation factor Ts from Finegoldia magna (strain ATCC 29328 / DSM 20472 / WAL 2508) (Peptostreptococcus magnus).